Consider the following 1214-residue polypeptide: Receptor-type guanylate cyclase gcy-19 (1214 aa).

Residues 1 to 18 form the signal peptide; the sequence is MEHLIFLLIFGGYSPSIA. The Extracellular segment spans residues 19–517; it reads QITSSTTTTT…PQTFVDQYGA (499 aa). N-linked (GlcNAc...) asparagine glycans are attached at residues Asn85, Asn363, Asn441, and Asn464. Residues 518-538 form a helical membrane-spanning segment; sequence LVFSIGGVLALAMLFLITCFF. Residues 539–1214 lie on the Cytoplasmic side of the membrane; it reads YVLRQRKLER…FRRQETLALM (676 aa). In terms of domain architecture, Protein kinase spans 572–859; sequence RMSKRSIQSG…KGNLMDHVFN (288 aa). The 131-residue stretch at 917–1047 folds into the Guanylate cyclase domain; sequence TVFFSDVVKF…DTVNTASRME (131 aa). The disordered stretch occupies residues 1116–1197; that stretch reads NSSNMAYNPE…EKAREIHNEE (82 aa). Acidic residues predominate over residues 1133-1142; the sequence is DDEDVDDESS. The span at 1186–1197 shows a compositional bias: basic and acidic residues; that stretch reads LEEKAREIHNEE.

It belongs to the adenylyl cyclase class-4/guanylyl cyclase family. In terms of tissue distribution, expressed asymmetrically in ASE right (ASER) sensory neuron.

It localises to the cell membrane. The enzyme catalyses GTP = 3',5'-cyclic GMP + diphosphate. Guanylate cyclase involved in the production of the second messenger cGMP. The sequence is that of Receptor-type guanylate cyclase gcy-19 from Caenorhabditis briggsae.